A 204-amino-acid chain; its full sequence is N-(5'-phosphoribosyl)anthranilate isomerase (204 aa).

This sequence belongs to the TrpF family.

It carries out the reaction N-(5-phospho-beta-D-ribosyl)anthranilate = 1-(2-carboxyphenylamino)-1-deoxy-D-ribulose 5-phosphate. The protein operates within amino-acid biosynthesis; L-tryptophan biosynthesis; L-tryptophan from chorismate: step 3/5. The chain is N-(5'-phosphoribosyl)anthranilate isomerase from Bacillus mycoides (strain KBAB4) (Bacillus weihenstephanensis).